A 282-amino-acid chain; its full sequence is Phosphate import ATP-binding protein PstB (282 aa).

Residues 36-277 form the ABC transporter domain; it reads IEVKNLNFFY…PARKETEDYI (242 aa). 68–75 contributes to the ATP binding site; the sequence is GPSGCGKS.

The protein belongs to the ABC transporter superfamily. Phosphate importer (TC 3.A.1.7) family. The complex is composed of two ATP-binding proteins (PstB), two transmembrane proteins (PstC and PstA) and a solute-binding protein (PstS).

Its subcellular location is the cell inner membrane. The catalysed reaction is phosphate(out) + ATP + H2O = ADP + 2 phosphate(in) + H(+). Functionally, part of the ABC transporter complex PstSACB involved in phosphate import. Responsible for energy coupling to the transport system. The chain is Phosphate import ATP-binding protein PstB from Burkholderia pseudomallei (strain 1710b).